The chain runs to 302 residues: Sulfate adenylyltransferase subunit 2 (302 aa).

It belongs to the PAPS reductase family. CysD subfamily. Heterodimer composed of CysD, the smaller subunit, and CysN.

The catalysed reaction is sulfate + ATP + H(+) = adenosine 5'-phosphosulfate + diphosphate. Its pathway is sulfur metabolism; hydrogen sulfide biosynthesis; sulfite from sulfate: step 1/3. Its function is as follows. With CysN forms the ATP sulfurylase (ATPS) that catalyzes the adenylation of sulfate producing adenosine 5'-phosphosulfate (APS) and diphosphate, the first enzymatic step in sulfur assimilation pathway. APS synthesis involves the formation of a high-energy phosphoric-sulfuric acid anhydride bond driven by GTP hydrolysis by CysN coupled to ATP hydrolysis by CysD. The polypeptide is Sulfate adenylyltransferase subunit 2 (Shewanella halifaxensis (strain HAW-EB4)).